The chain runs to 165 residues: Destrin (165 aa).

Residue Ala-2 is modified to N-acetylalanine. A Phosphoserine modification is found at Ser-3. An ADF-H domain is found at 4–153; sequence GVQVADEVCR…NRTCIAEKLG (150 aa). N6-acetyllysine is present on Lys-19. The short motif at 30 to 34 is the Nuclear localization signal element; the sequence is KKRKK.

This sequence belongs to the actin-binding proteins ADF family. Post-translationally, ISGylated. Widely expressed. Not found in skeletal muscle.

Functionally, actin-depolymerizing protein. Severs actin filaments (F-actin) and binds to actin monomers (G-actin). Acts in a pH-independent manner. This Mus musculus (Mouse) protein is Destrin (Dstn).